The following is a 463-amino-acid chain: GTPase Der (463 aa).

EngA-type G domains follow at residues 2–164 (KKII…PKSK) and 198–369 (IKIG…KNYT). GTP contacts are provided by residues 8–15 (GRPNVGKS), 55–59 (DSGGL), 116–119 (NKVD), 204–211 (GRVNVGKS), 251–255 (DTAGI), and 315–318 (NKWD). One can recognise a KH-like domain in the interval 370–454 (QKMKTSRLNE…PVILIPKNRS (85 aa)).

It belongs to the TRAFAC class TrmE-Era-EngA-EngB-Septin-like GTPase superfamily. EngA (Der) GTPase family. Associates with the 50S ribosomal subunit.

In terms of biological role, GTPase that plays an essential role in the late steps of ribosome biogenesis. The chain is GTPase Der from Campylobacter fetus subsp. fetus (strain 82-40).